A 208-amino-acid polypeptide reads, in one-letter code: GTP-binding protein YPTM1 (208 aa).

GTP contacts are provided by residues 15–23 (GDSSVGKSC), 33–40 (YVDSYIST), 63–67 (DTAGQ), 121–124 (NKCD), and 151–153 (SAK). Residues 37–45 (YISTIGVDF) carry the Effector region motif. The tract at residues 189–208 (QMKGRPIQQEQQKSSRCCST) is disordered. The segment covering 196-208 (QQEQQKSSRCCST) has biased composition (polar residues). S-geranylgeranyl cysteine attachment occurs at residues C205 and C206.

This sequence belongs to the small GTPase superfamily. Rab family. In terms of tissue distribution, low levels in coleoptiles.

It localises to the cell membrane. Functionally, protein transport. Probably involved in vesicular traffic. In Zea mays (Maize), this protein is GTP-binding protein YPTM1 (YPTM1).